We begin with the raw amino-acid sequence, 310 residues long: DnaJ-like protein MG002 (310 aa).

The 66-residue stretch at 1–66 folds into the J domain; it reads MNLYDLLELP…KEKYDSMLKV (66 aa).

This Mycoplasma genitalium (strain ATCC 33530 / DSM 19775 / NCTC 10195 / G37) (Mycoplasmoides genitalium) protein is DnaJ-like protein MG002.